Consider the following 257-residue polypeptide: Acetylglutamate kinase (257 aa).

Substrate-binding positions include 43–44 (GG), Arg65, and Asn157. Residues 180-185 (DVSGIL) and 208-210 (IIT) contribute to the ATP site.

This sequence belongs to the acetylglutamate kinase family. ArgB subfamily. In terms of assembly, homodimer.

The protein resides in the cytoplasm. It carries out the reaction N-acetyl-L-glutamate + ATP = N-acetyl-L-glutamyl 5-phosphate + ADP. Its pathway is amino-acid biosynthesis; L-arginine biosynthesis; N(2)-acetyl-L-ornithine from L-glutamate: step 2/4. Catalyzes the ATP-dependent phosphorylation of N-acetyl-L-glutamate. The sequence is that of Acetylglutamate kinase from Salmonella agona (strain SL483).